The primary structure comprises 269 residues: Pertussis toxin subunit 1 (269 aa).

An N-terminal signal peptide occupies residues 1–34 (MRCTRAIRQTARTGWLTWLAILAVTAPVTSPAWA). Residue W60 coordinates NAD(+). Residues H69 and E163 contribute to the active site. C75 and C235 are joined by a disulfide.

The protein belongs to the bacterial exotoxin subunit A family. Pertussis toxin contains five different chains, S1-S5. They are organized into 2 functional subunits: A, composed of S1 (which is toxic) and B, containing S2, S3, S5, and two copies of S4 (B binds to the membrane receptors). Dimers of S2-S4 and S3-S4 are held together by S5.

The protein resides in the secreted. Its function is as follows. S1 is an NAD-dependent ADP-ribosyltransferase, which plays a crucial role in the pathogenesis of B.pertussis causing disruption of normal host cellular regulation. It catalyzes the ADP-ribosylation of a cysteine in the alpha subunit of host heterotrimeric G proteins. In the absence of G proteins it also catalyzes the cleavage of NAD(+) into ADP-ribose and nicotinamide. It irreversibly uncouples the G-alpha GTP-binding proteins from their membrane receptors. This Bordetella pertussis (strain Tohama I / ATCC BAA-589 / NCTC 13251) protein is Pertussis toxin subunit 1 (ptxA).